Reading from the N-terminus, the 128-residue chain is Diacylglycerol kinase (128 aa).

Glu34 provides a ligand contact to a divalent metal cation. Helical transmembrane passes span 35–55 and 58–78; these read SAFR…SYLT and FLEW…ELIN. Glu75 serves as the catalytic Proton acceptor. Glu82 contacts a divalent metal cation. A helical transmembrane segment spans residues 108–128; sequence LIGLIFWAFIWGRYLLTLYFN.

It belongs to the bacterial diacylglycerol kinase family. Mg(2+) is required as a cofactor.

It localises to the cell inner membrane. It carries out the reaction a 1,2-diacyl-sn-glycerol + ATP = a 1,2-diacyl-sn-glycero-3-phosphate + ADP + H(+). Its function is as follows. Catalyzes the ATP-dependent phosphorylation of sn-l,2-diacylglycerol (DAG) to phosphatidic acid. Involved in the recycling of diacylglycerol produced as a by-product during membrane-derived oligosaccharide (MDO) biosynthesis. The protein is Diacylglycerol kinase (dgkA) of Helicobacter pylori (strain J99 / ATCC 700824) (Campylobacter pylori J99).